The chain runs to 181 residues: MASLTSLIFVSIVTAAHGQTVVSIPLGHNYTLIGPPITSEVIWTKLGSVDYFDIICNKTKPIIVTCNIQNLTLINVSKVYSGYYYGYDRYSSQYRNYLVRVTQLKTTKMPNMAKIRSDDNSLETFTSPTTPDEKNIPDSMIAIVAAVAVVMALIIICMLLYACRYKKFHPKKQDLLLRLNI.

Asn29, Asn57, Asn70, and Asn75 each carry an N-linked (GlcNAc...) asparagine; by host glycan.

The protein belongs to the adenoviridae E3_20 family.

Functionally, E3 proteins seem to be dispensable for virus growth in tissue culture cells. They are potentially important for virus growth under special conditions; E3 region may help adenoviruses to evade the immune surveillance of the host. The sequence is that of Early E3 20.3 kDa glycoprotein from Homo sapiens (Human).